Here is a 451-residue protein sequence, read N- to C-terminus: Uronate isomerase (451 aa).

It belongs to the metallo-dependent hydrolases superfamily. Uronate isomerase family. As to quaternary structure, homotrimer.

It carries out the reaction D-glucuronate = D-fructuronate. The enzyme catalyses aldehydo-D-galacturonate = keto-D-tagaturonate. It participates in carbohydrate metabolism; pentose and glucuronate interconversion. This chain is Uronate isomerase, found in Thermotoga maritima (strain ATCC 43589 / DSM 3109 / JCM 10099 / NBRC 100826 / MSB8).